Reading from the N-terminus, the 227-residue chain is Probable methylthioribulose-1-phosphate dehydratase (227 aa).

C87 contributes to the substrate binding site. 2 residues coordinate Zn(2+): H105 and H107. The Proton donor/acceptor role is filled by E129. H185 lines the Zn(2+) pocket.

It belongs to the aldolase class II family. MtnB subfamily. Zn(2+) serves as cofactor.

Its subcellular location is the cytoplasm. It catalyses the reaction 5-(methylsulfanyl)-D-ribulose 1-phosphate = 5-methylsulfanyl-2,3-dioxopentyl phosphate + H2O. It functions in the pathway amino-acid biosynthesis; L-methionine biosynthesis via salvage pathway; L-methionine from S-methyl-5-thio-alpha-D-ribose 1-phosphate: step 2/6. In terms of biological role, catalyzes the dehydration of methylthioribulose-1-phosphate (MTRu-1-P) into 2,3-diketo-5-methylthiopentyl-1-phosphate (DK-MTP-1-P). The protein is Probable methylthioribulose-1-phosphate dehydratase of Drosophila erecta (Fruit fly).